The following is a 181-amino-acid chain: Regulator of G-protein signaling 10 (181 aa).

Residues 1 to 35 (MFTRAVSRLSRKRPPSDIHDGDGSSSSGHQSLKST) form a disordered region. A phosphoserine mark is found at Ser-24 and Ser-41. Residues 41 to 156 (SLENLLEDPE…LKSDLFLKHR (116 aa)) form the RGS domain. Residue Cys-74 is the site of S-palmitoyl cysteine attachment. The interval 157-181 (RTEEEEEDPPDAQTAAKRASRIYNT) is disordered. Ser-176 is subject to Phosphoserine.

As to quaternary structure, interacts with GNAZ, GNAI1 and GNAI3. Associates specifically with the activated, GTP-bound forms of GNAZ and GNAI3.

It is found in the cytoplasm. Its subcellular location is the cytosol. The protein localises to the nucleus. Functionally, regulates G protein-coupled receptor signaling cascades, including signaling downstream of the muscarinic acetylcholine receptor CHRM2. Inhibits signal transduction by increasing the GTPase activity of G protein alpha subunits, thereby driving them into their inactive GDP-bound form. Modulates the activity of potassium channels that are activated in response to CHRM2 signaling. Activity on GNAZ is inhibited by palmitoylation of the G-protein. The sequence is that of Regulator of G-protein signaling 10 (Rgs10) from Rattus norvegicus (Rat).